The sequence spans 236 residues: MKKPLLLTLLCMILAGCDNPKSPESFTPEMASFSNEFDFDPLRGPVKDFSQTLMSENGEVAKQVTGTLSQEGCFDTLELHDLENNTGLALVLDANYYRDAQTLEKKVQLQGKCQLAALPSAGVTWETDDNGFVVSATGKEMKVEYRYDSEGYPLGKTTINSQNTLSVTAKLSTDSRKKLDYTAVSRVDDRQVGNVTQSCEYDAYANPVDCRLVIVDESVKPAVSHHYTIKNRIDYY.

The signal sequence occupies residues 1-16 (MKKPLLLTLLCMILAG). Cysteine 17 is lipidated: N-palmitoyl cysteine. Cysteine 17 carries the S-diacylglycerol cysteine lipid modification.

The protein belongs to the UPF0257 family.

The protein resides in the cell membrane. This Salmonella typhi protein is UPF0257 lipoprotein YnfC.